The primary structure comprises 303 residues: Glycine betaine/carnitine/choline-binding protein OpuCC (303 aa).

Residues 1–20 form the signal peptide; sequence MTKIKWLGAFALVFVMLLGG. Residue C21 is the site of N-palmitoyl cysteine attachment. C21 is lipidated: S-diacylglycerol cysteine.

This sequence belongs to the OsmX family. As to quaternary structure, the complex is composed of two ATP-binding proteins (OpuCA), two transmembrane proteins (OpuCB and OpuCD) and a solute-binding protein (OpuCC).

The protein resides in the cell membrane. Functionally, member of a high affinity multicomponent binding-protein-dependent transport system for glycine betaine, carnitine, and choline. The protein is Glycine betaine/carnitine/choline-binding protein OpuCC (opuCC) of Bacillus subtilis (strain 168).